We begin with the raw amino-acid sequence, 274 residues long: NAD kinase (274 aa).

Asp59 serves as the catalytic Proton acceptor. Residues 59–60, 133–134, Arg144, Asp163, 174–179, and Gln233 each bind NAD(+); these read DG, ND, and TAYALS.

Belongs to the NAD kinase family. It depends on a divalent metal cation as a cofactor.

The protein resides in the cytoplasm. It carries out the reaction NAD(+) + ATP = ADP + NADP(+) + H(+). Its function is as follows. Involved in the regulation of the intracellular balance of NAD and NADP, and is a key enzyme in the biosynthesis of NADP. Catalyzes specifically the phosphorylation on 2'-hydroxyl of the adenosine moiety of NAD to yield NADP. The chain is NAD kinase from Aquifex aeolicus (strain VF5).